A 444-amino-acid chain; its full sequence is MSQSYINVIGAGLAGSEAAYQIAKRGIPVKLYEMRGVKSTPQHKTDNFAELVCSNSFRGDSLTNAVGLLKEEMRRLDSIIMRNGEAHRVPAGGAMAVDREGYSEAVTEEIHKHPLIEVIRDEITDIPGDAITVIATGPLTSDSLAAKIHELNGGDGFYFYDAAAPIVDKNTIDINKVYLKSRYDKGEAAYLNCPMTKEEFMAFHEALTTAEEAPLNSFEKEKYFEGCMPIEVMAKRGIKTMLYGPMKPVGLEYPEDYKGPRDGEFKTPYAVVQLRQDNAAGSLYNIVGFQTHLKWGEQKRVFQMIPGLENAEFVRYGVMHRNSYMDSPNLLNQTFATRKNPNLFFAGQMTGVEGYVESAASGLVAGINAVRRFNGESEVVFPQTTAIGALPHYITHTDSKHFQPMNVNFGIIKELEGPRIRDKKERYEAIATRALKDLEKFLNY.

10 to 15 (GAGLAG) is a binding site for FAD.

The protein belongs to the MnmG family. TrmFO subfamily. Requires FAD as cofactor.

It localises to the cytoplasm. It carries out the reaction uridine(54) in tRNA + (6R)-5,10-methylene-5,6,7,8-tetrahydrofolate + NADH + H(+) = 5-methyluridine(54) in tRNA + (6S)-5,6,7,8-tetrahydrofolate + NAD(+). It catalyses the reaction uridine(54) in tRNA + (6R)-5,10-methylene-5,6,7,8-tetrahydrofolate + NADPH + H(+) = 5-methyluridine(54) in tRNA + (6S)-5,6,7,8-tetrahydrofolate + NADP(+). Its function is as follows. Catalyzes the folate-dependent formation of 5-methyl-uridine at position 54 (M-5-U54) in all tRNAs. In Streptococcus agalactiae serotype Ia (strain ATCC 27591 / A909 / CDC SS700), this protein is Methylenetetrahydrofolate--tRNA-(uracil-5-)-methyltransferase TrmFO.